We begin with the raw amino-acid sequence, 526 residues long: Vitamin B6 transporter bsu1 (526 aa).

Residues 1-53 (MASKIASLFSPSETASKDQHENVAEDLELGTASSQSDGIHETNSEYDEKKREE) form a disordered region. Residues 38 to 53 (GIHETNSEYDEKKREE) are compositionally biased toward basic and acidic residues. 12 helical membrane-spanning segments follow: residues 81-101 (WSIV…SNGF), 118-138 (VATL…MFLG), 147-167 (KPVY…CALP), 173-192 (MIIS…TNVA), 204-224 (AGVP…GAPM), 238-257 (WLYY…ILII), 314-330 (LYNF…LTAI), 349-366 (YLSG…QPIQ), 387-407 (FTSA…FAFT), 413-432 (PWMS…GHNW), 444-461 (PLLS…SFIG), and 480-501 (WAVA…TFYF).

The protein belongs to the major facilitator superfamily. CAR1 family.

It is found in the membrane. Functionally, thiamine-regulated, high affinity import carrier of pyridoxine, pyridoxal and pyridoxamine. Also imports, but does not export, amiloride and so confers sensitivity. In Schizosaccharomyces pombe (strain 972 / ATCC 24843) (Fission yeast), this protein is Vitamin B6 transporter bsu1 (bsu1).